Consider the following 252-residue polypeptide: tRNA pseudouridine synthase A (252 aa).

Residue D52 is the Nucleophile of the active site. Y111 contacts substrate.

The protein belongs to the tRNA pseudouridine synthase TruA family. Homodimer.

The catalysed reaction is uridine(38/39/40) in tRNA = pseudouridine(38/39/40) in tRNA. In terms of biological role, formation of pseudouridine at positions 38, 39 and 40 in the anticodon stem and loop of transfer RNAs. The sequence is that of tRNA pseudouridine synthase A from Parabacteroides distasonis (strain ATCC 8503 / DSM 20701 / CIP 104284 / JCM 5825 / NCTC 11152).